Consider the following 161-residue polypeptide: MTDHDERTFVMVKPDGVQRGLIGDIVTRLETKGLKMVGGKFMRIDEELAHEHYAEHEDKPFFDGLVSFITSGPVFAMVWEGADATRQVRQLMGATDAQDAAPGTIRGDYGNDLGHNLIHGSDHEDEGANEREIALFFDDDELVDWDRDASAWVYEDLADHD.

ATP-binding residues include K13, F61, R89, T95, R106, and N116. The active-site Pros-phosphohistidine intermediate is H119.

It belongs to the NDK family. Mg(2+) is required as a cofactor.

Its subcellular location is the cytoplasm. The catalysed reaction is a 2'-deoxyribonucleoside 5'-diphosphate + ATP = a 2'-deoxyribonucleoside 5'-triphosphate + ADP. It carries out the reaction a ribonucleoside 5'-diphosphate + ATP = a ribonucleoside 5'-triphosphate + ADP. In terms of biological role, major role in the synthesis of nucleoside triphosphates other than ATP. The ATP gamma phosphate is transferred to the NDP beta phosphate via a ping-pong mechanism, using a phosphorylated active-site intermediate. The chain is Nucleoside diphosphate kinase from Halobacterium salinarum (strain ATCC 29341 / DSM 671 / R1).